The following is a 406-amino-acid chain: Tryptophan synthase beta chain (406 aa).

At K99 the chain carries N6-(pyridoxal phosphate)lysine.

This sequence belongs to the TrpB family. In terms of assembly, tetramer of two alpha and two beta chains. Pyridoxal 5'-phosphate serves as cofactor.

It catalyses the reaction (1S,2R)-1-C-(indol-3-yl)glycerol 3-phosphate + L-serine = D-glyceraldehyde 3-phosphate + L-tryptophan + H2O. It functions in the pathway amino-acid biosynthesis; L-tryptophan biosynthesis; L-tryptophan from chorismate: step 5/5. The beta subunit is responsible for the synthesis of L-tryptophan from indole and L-serine. The sequence is that of Tryptophan synthase beta chain from Rhizobium johnstonii (strain DSM 114642 / LMG 32736 / 3841) (Rhizobium leguminosarum bv. viciae).